A 176-amino-acid polypeptide reads, in one-letter code: CASP-like protein 5A1 (176 aa).

The Cytoplasmic portion of the chain corresponds to 1–35 (MNPSHPAVHPVEAPPTDVHHAPRVRMKDYQGMPGT). Residues 36–56 (LGGLALRLGQFCFAVVAFSIM) form a helical membrane-spanning segment. Topologically, residues 57-67 (LSTDDFSTVTA) are extracellular. Residues 68–88 (FCYLVAATVLQCLWSLALAVI) traverse the membrane as a helical segment. Residues 89-102 (DGYALLVKRSLRNS) lie on the Cytoplasmic side of the membrane. A helical transmembrane segment spans residues 103 to 123 (LVVSLFVVGDGVTATLTFAAA). Topologically, residues 124-152 (CASAGITVLIGNDLRECDQNHCGKYETAT) are extracellular. A helical transmembrane segment spans residues 153-173 (AMAFLSWFMVSPSFLLTFWLL). Topologically, residues 174–176 (ASR) are cytoplasmic.

This sequence belongs to the Casparian strip membrane proteins (CASP) family. As to quaternary structure, homodimer and heterodimers.

It localises to the cell membrane. This Ginkgo biloba (Ginkgo) protein is CASP-like protein 5A1.